Here is a 370-residue protein sequence, read N- to C-terminus: Queuine tRNA-ribosyltransferase (370 aa).

Asp89 serves as the catalytic Proton acceptor. Substrate contacts are provided by residues 89-93 (DSGGF), Asp143, Gln187, and Gly214. The segment at 245–251 (GVGKPED) is RNA binding. The active-site Nucleophile is Asp264. The tract at residues 269 to 273 (TRNAR) is RNA binding; important for wobble base 34 recognition. Residues Cys302, Cys304, Cys307, and His333 each coordinate Zn(2+).

Belongs to the queuine tRNA-ribosyltransferase family. As to quaternary structure, homodimer. Within each dimer, one monomer is responsible for RNA recognition and catalysis, while the other monomer binds to the replacement base PreQ1. Zn(2+) serves as cofactor.

It carries out the reaction 7-aminomethyl-7-carbaguanine + guanosine(34) in tRNA = 7-aminomethyl-7-carbaguanosine(34) in tRNA + guanine. Its pathway is tRNA modification; tRNA-queuosine biosynthesis. In terms of biological role, catalyzes the base-exchange of a guanine (G) residue with the queuine precursor 7-aminomethyl-7-deazaguanine (PreQ1) at position 34 (anticodon wobble position) in tRNAs with GU(N) anticodons (tRNA-Asp, -Asn, -His and -Tyr). Catalysis occurs through a double-displacement mechanism. The nucleophile active site attacks the C1' of nucleotide 34 to detach the guanine base from the RNA, forming a covalent enzyme-RNA intermediate. The proton acceptor active site deprotonates the incoming PreQ1, allowing a nucleophilic attack on the C1' of the ribose to form the product. After dissociation, two additional enzymatic reactions on the tRNA convert PreQ1 to queuine (Q), resulting in the hypermodified nucleoside queuosine (7-(((4,5-cis-dihydroxy-2-cyclopenten-1-yl)amino)methyl)-7-deazaguanosine). This Baumannia cicadellinicola subsp. Homalodisca coagulata protein is Queuine tRNA-ribosyltransferase.